The primary structure comprises 160 residues: Epithelial membrane protein 1 (160 aa).

Residues 1-21 (MLVLLAGLFVVHIATAIMLFV) traverse the membrane as a helical segment. Residues N35 and N43 are each glycosylated (N-linked (GlcNAc...) asparagine). Transmembrane regions (helical) follow at residues 67–87 (FMILSIIFSIISLVVFVFQLF) and 95–115 (FFLSGSTMLVCWLCILVGVSI). N128 carries an N-linked (GlcNAc...) asparagine glycan. The chain crosses the membrane as a helical span at residues 137–157 (FILTWICFCFSFIIGILYMVL).

The protein belongs to the PMP-22/EMP/MP20 family.

The protein localises to the membrane. This chain is Epithelial membrane protein 1 (Emp1), found in Mus musculus (Mouse).